Here is a 419-residue protein sequence, read N- to C-terminus: Tyrosine--tRNA ligase 2 (419 aa).

Tyr-34 provides a ligand contact to L-tyrosine. A 'HIGH' region motif is present at residues 39–48; the sequence is PTGDSMHIGH. 2 residues coordinate L-tyrosine: Tyr-168 and Gln-172. Positions 230–234 match the 'KMSKS' region motif; the sequence is KFGKS. Lys-233 contacts ATP. One can recognise an S4 RNA-binding domain in the interval 352–418; it reads KNIVEWLVDL…GKKNYSLVKL (67 aa).

It belongs to the class-I aminoacyl-tRNA synthetase family. TyrS type 1 subfamily. In terms of assembly, homodimer.

The protein localises to the cytoplasm. It catalyses the reaction tRNA(Tyr) + L-tyrosine + ATP = L-tyrosyl-tRNA(Tyr) + AMP + diphosphate + H(+). Its function is as follows. Catalyzes the attachment of tyrosine to tRNA(Tyr) in a two-step reaction: tyrosine is first activated by ATP to form Tyr-AMP and then transferred to the acceptor end of tRNA(Tyr). The polypeptide is Tyrosine--tRNA ligase 2 (Bacillus cereus (strain ATCC 10987 / NRS 248)).